The sequence spans 144 residues: uncharacterized protein (144 aa).

A signal peptide spans M1–Y23.

This is an uncharacterized protein from Archaeoglobus fulgidus (strain ATCC 49558 / DSM 4304 / JCM 9628 / NBRC 100126 / VC-16).